Consider the following 233-residue polypeptide: Cell number regulator 8 (233 aa).

Transmembrane regions (helical) follow at residues 85-101 (VCLL…GSNV) and 115-138 (CLPY…APWF).

It belongs to the cornifelin family. Expressed in roots, coleoptiles, leaves, stalks, apical meristems, immature ears, embryos, endosperm, pericarp, silks, tassel spikelets and pollen. Highest expression in the pericarp and stalks.

It localises to the membrane. This chain is Cell number regulator 8 (CNR8), found in Zea mays (Maize).